An 86-amino-acid chain; its full sequence is Muscarinic toxin-like protein (86 aa).

The first 21 residues, 1 to 21, serve as a signal peptide directing secretion; sequence MKTLLLTLAVVTMVCMDLGYT. 4 disulfides stabilise this stretch: C24-C45, C38-C62, C66-C78, and C79-C84.

The protein belongs to the three-finger toxin family. Short-chain subfamily. Orphan group VIII (haditoxin) sub-subfamily. As to quaternary structure, homodimer; non-covalently linked. Expressed by the venom gland.

The protein resides in the secreted. Antagonist of muscle and neuronal nicotinic acetylcholine receptors (nAChR) with highest affinity for neuronal alpha-7/CHRNA7 nAChRs. This Bungarus multicinctus (Many-banded krait) protein is Muscarinic toxin-like protein.